The primary structure comprises 476 residues: Bifunctional protein HldE (476 aa).

Residues 1–319 (MKITLPEYDK…ANAVYSQQEI (319 aa)) form a ribokinase region. An ATP-binding site is contributed by 196 to 199 (NLAE). Residue aspartate 265 is part of the active site. Residues 345–476 (MTNGCFDILH…EIIKTIRNNS (132 aa)) are cytidylyltransferase.

This sequence in the N-terminal section; belongs to the carbohydrate kinase PfkB family. The protein in the C-terminal section; belongs to the cytidylyltransferase family. Homodimer.

The catalysed reaction is D-glycero-beta-D-manno-heptose 7-phosphate + ATP = D-glycero-beta-D-manno-heptose 1,7-bisphosphate + ADP + H(+). It carries out the reaction D-glycero-beta-D-manno-heptose 1-phosphate + ATP + H(+) = ADP-D-glycero-beta-D-manno-heptose + diphosphate. It functions in the pathway nucleotide-sugar biosynthesis; ADP-L-glycero-beta-D-manno-heptose biosynthesis; ADP-L-glycero-beta-D-manno-heptose from D-glycero-beta-D-manno-heptose 7-phosphate: step 1/4. It participates in nucleotide-sugar biosynthesis; ADP-L-glycero-beta-D-manno-heptose biosynthesis; ADP-L-glycero-beta-D-manno-heptose from D-glycero-beta-D-manno-heptose 7-phosphate: step 3/4. Catalyzes the phosphorylation of D-glycero-D-manno-heptose 7-phosphate at the C-1 position to selectively form D-glycero-beta-D-manno-heptose-1,7-bisphosphate. Functionally, catalyzes the ADP transfer from ATP to D-glycero-beta-D-manno-heptose 1-phosphate, yielding ADP-D-glycero-beta-D-manno-heptose. The sequence is that of Bifunctional protein HldE from Psychromonas ingrahamii (strain DSM 17664 / CCUG 51855 / 37).